The primary structure comprises 448 residues: O-Mevalon transferase yanI (448 aa).

N-linked (GlcNAc...) asparagine glycosylation occurs at Asn-2. Transmembrane regions (helical) follow at residues 21–41 (VLLS…LLAV), 54–74 (YGLL…PPPP), 79–96 (AVLY…ARYF), 165–185 (FVTA…LVEV), 217–237 (LIVL…VLPL), 316–336 (MLML…SYHV), 350–370 (VKYF…CWLL), and 390–410 (IVTA…PVAL).

This sequence belongs to the wax synthase family.

Its subcellular location is the membrane. It participates in secondary metabolite biosynthesis; terpenoid biosynthesis. Functionally, O-Mevalon transferase yanI; part of the gene cluster that mediates the biosynthesis of yanuthone D, a fungal isoprenoid epoxycyclohexenone that acts as an antibiotic against fungi and bacteria. The first step of the pathway is the synthesis of 6-methylsalicylic acid (6-MSA) by the polyketide synthase yanA. 6-MSA is then converted to m-cresol by the decarboxylase yanB. The cytochrome P450 monooxygenase yanC then catalyzes the oxidation of m-cresol to toluquinol. Epoxidation of toluquinol is then performed by the short chain dehydrogenase yanD, with the help of yanE, and a further prenylation by yanG leads to 7-deacetoxyyanuthone A. The next step is the hydroxylation of C-22 of 7-deacetoxyyanuthone A by the cytochrome P450 monooxygenase yanH to yield 22-deacetylyanuthone A. O-Mevalon transferase yanI then attaches mevalon to the hydroxyl group of 22-deacetylyanuthone A to produce yanuthone E. Finally, the FAD-dependent monooxygenase yanF oxidizes the hydroxyl group at C15 of yanuthone E to form yanuthone D. Furthermore, several branching points in the pathway lead to the production of yanuthones F and G from 7-deacetoxyyanuthone A; yanuthones H and I from 22-deacetylyanuthone A; and yanuthone J from yanuthone E. In Aspergillus niger (strain ATCC 1015 / CBS 113.46 / FGSC A1144 / LSHB Ac4 / NCTC 3858a / NRRL 328 / USDA 3528.7), this protein is O-Mevalon transferase yanI.